A 190-amino-acid polypeptide reads, in one-letter code: Xanthine phosphoribosyltransferase (190 aa).

Xanthine-binding residues include leucine 20 and asparagine 27. 128-132 (ANGKA) contacts 5-phospho-alpha-D-ribose 1-diphosphate. Lysine 156 serves as a coordination point for xanthine.

The protein belongs to the purine/pyrimidine phosphoribosyltransferase family. Xpt subfamily. Homodimer.

The protein resides in the cytoplasm. It carries out the reaction XMP + diphosphate = xanthine + 5-phospho-alpha-D-ribose 1-diphosphate. It functions in the pathway purine metabolism; XMP biosynthesis via salvage pathway; XMP from xanthine: step 1/1. Its function is as follows. Converts the preformed base xanthine, a product of nucleic acid breakdown, to xanthosine 5'-monophosphate (XMP), so it can be reused for RNA or DNA synthesis. The sequence is that of Xanthine phosphoribosyltransferase from Pseudomonas fluorescens (strain ATCC BAA-477 / NRRL B-23932 / Pf-5).